The chain runs to 197 residues: 3-isopropylmalate dehydratase small subunit (197 aa).

Belongs to the LeuD family. LeuD type 1 subfamily. Heterodimer of LeuC and LeuD.

The enzyme catalyses (2R,3S)-3-isopropylmalate = (2S)-2-isopropylmalate. Its pathway is amino-acid biosynthesis; L-leucine biosynthesis; L-leucine from 3-methyl-2-oxobutanoate: step 2/4. In terms of biological role, catalyzes the isomerization between 2-isopropylmalate and 3-isopropylmalate, via the formation of 2-isopropylmaleate. This Shouchella clausii (strain KSM-K16) (Alkalihalobacillus clausii) protein is 3-isopropylmalate dehydratase small subunit.